A 278-amino-acid polypeptide reads, in one-letter code: MDVRQSIHGAHAKTLDTQGLRNEFLVEKVFVADEYTMVYSHIDRIIVGGIMPITKTVSVGGEVGKQLGVSYFLERRELGVINIGGAGTITVDGQCYEIGHRDALYVGKGAKEVVFASIDTATPAKFYYNCAPAHTTYPTKKVTPDEVSPVTLGDNLTSNRRTINKYFVPDVLETCQLSMGLTELAPGNLWNTMPCHTHERRMEVYFYFNMDDDACVFHMMGQPQETRHIVMHNEQAVISPSWSIHSGVGTKAYTFIWGMVGENQVFNDMDHVGVKDLR.

The Zn(2+) site is built by His-196, His-198, Glu-203, and His-245.

Belongs to the KduI family. Zn(2+) serves as cofactor.

The catalysed reaction is 5-dehydro-4-deoxy-D-glucuronate = 3-deoxy-D-glycero-2,5-hexodiulosonate. The protein operates within glycan metabolism; pectin degradation; 2-dehydro-3-deoxy-D-gluconate from pectin: step 4/5. Catalyzes the isomerization of 5-dehydro-4-deoxy-D-glucuronate to 3-deoxy-D-glycero-2,5-hexodiulosonate. This chain is 4-deoxy-L-threo-5-hexosulose-uronate ketol-isomerase, found in Shigella flexneri.